An 80-amino-acid chain; its full sequence is UPF0291 protein llmg_1475 (80 aa).

Belongs to the UPF0291 family.

It localises to the cytoplasm. This Lactococcus lactis subsp. cremoris (strain MG1363) protein is UPF0291 protein llmg_1475.